Consider the following 236-residue polypeptide: Putative N-acetylmannosamine-6-phosphate 2-epimerase (236 aa).

Belongs to the NanE family.

It catalyses the reaction an N-acyl-D-glucosamine 6-phosphate = an N-acyl-D-mannosamine 6-phosphate. The protein operates within amino-sugar metabolism; N-acetylneuraminate degradation; D-fructose 6-phosphate from N-acetylneuraminate: step 3/5. Its function is as follows. Converts N-acetylmannosamine-6-phosphate (ManNAc-6-P) to N-acetylglucosamine-6-phosphate (GlcNAc-6-P). The chain is Putative N-acetylmannosamine-6-phosphate 2-epimerase from Listeria welshimeri serovar 6b (strain ATCC 35897 / DSM 20650 / CCUG 15529 / CIP 8149 / NCTC 11857 / SLCC 5334 / V8).